We begin with the raw amino-acid sequence, 326 residues long: ATPase GET3 (326 aa).

32-39 provides a ligand contact to ATP; that stretch reads KGGVGKTT. Residue Asp-61 is part of the active site. ATP-binding residues include Glu-244 and Asn-271. Cys-282 and Cys-285 together coordinate Zn(2+).

Belongs to the arsA ATPase family. In terms of assembly, homodimer.

Its subcellular location is the cytoplasm. It is found in the endoplasmic reticulum. ATPase required for the post-translational delivery of tail-anchored (TA) proteins to the endoplasmic reticulum. Recognizes and selectively binds the transmembrane domain of TA proteins in the cytosol. This complex then targets to the endoplasmic reticulum by membrane-bound receptors, where the tail-anchored protein is released for insertion. This process is regulated by ATP binding and hydrolysis. ATP binding drives the homodimer towards the closed dimer state, facilitating recognition of newly synthesized TA membrane proteins. ATP hydrolysis is required for insertion. Subsequently, the homodimer reverts towards the open dimer state, lowering its affinity for the membrane-bound receptor, and returning it to the cytosol to initiate a new round of targeting. The protein is ATPase GET3 of Phaeosphaeria nodorum (strain SN15 / ATCC MYA-4574 / FGSC 10173) (Glume blotch fungus).